We begin with the raw amino-acid sequence, 165 residues long: uncharacterized protein (165 aa).

The protein belongs to the SixA phosphatase family.

This is an uncharacterized protein from Picosynechococcus sp. (strain ATCC 27264 / PCC 7002 / PR-6) (Agmenellum quadruplicatum).